Consider the following 161-residue polypeptide: Nucleotide-binding protein Tbd_1846 (161 aa).

The protein belongs to the YajQ family.

Its function is as follows. Nucleotide-binding protein. This chain is Nucleotide-binding protein Tbd_1846, found in Thiobacillus denitrificans (strain ATCC 25259 / T1).